A 30-amino-acid chain; its full sequence is Kalata-B10 (30 aa).

A cross-link (cyclopeptide (Gly-Asp)) is located at residues 1-30 (GLPTCGETCFGGTCNTPGCSCSSWPICTRD). Cystine bridges form between Cys5-Cys19, Cys9-Cys21, and Cys14-Cys27.

Belongs to the cyclotide family. Moebius subfamily. Post-translationally, this peptide occurs in both cyclic and linear forms. The linear form contains unmodified Trp-24, the cyclic peptide occurs in two forms with unmodified Trp-24, and with Trp-24 oxidized to form oxindolylalanine. Oxidation is enhanced by exposure to sunlight.

In terms of biological role, probably participates in a plant defense mechanism. The protein is Kalata-B10 of Oldenlandia affinis.